The chain runs to 338 residues: Anthranilate phosphoribosyltransferase (338 aa).

5-phospho-alpha-D-ribose 1-diphosphate-binding positions include Gly-81, 84–85 (GD), Thr-89, 91–94 (NIST), 109–117 (KHGNRSMVS), and Ser-121. Residue Gly-81 coordinates anthranilate. Position 93 (Ser-93) interacts with Mg(2+). Anthranilate is bound at residue Asn-112. Arg-167 contributes to the anthranilate binding site. Mg(2+) is bound by residues Asp-226 and Glu-227.

The protein belongs to the anthranilate phosphoribosyltransferase family. In terms of assembly, homodimer. It depends on Mg(2+) as a cofactor.

The enzyme catalyses N-(5-phospho-beta-D-ribosyl)anthranilate + diphosphate = 5-phospho-alpha-D-ribose 1-diphosphate + anthranilate. The protein operates within amino-acid biosynthesis; L-tryptophan biosynthesis; L-tryptophan from chorismate: step 2/5. In terms of biological role, catalyzes the transfer of the phosphoribosyl group of 5-phosphorylribose-1-pyrophosphate (PRPP) to anthranilate to yield N-(5'-phosphoribosyl)-anthranilate (PRA). This is Anthranilate phosphoribosyltransferase from Acidithiobacillus ferrooxidans (strain ATCC 23270 / DSM 14882 / CIP 104768 / NCIMB 8455) (Ferrobacillus ferrooxidans (strain ATCC 23270)).